Reading from the N-terminus, the 345-residue chain is High mobility group protein 20A (345 aa).

Disordered regions lie at residues 1–124 (MENT…TERP) and 167–198 (QYQN…VRGV). Polar residues-rich tracts occupy residues 32-48 (LSGS…PTLQ) and 57-67 (LQQSGEQQLGN). Residues 80–94 (TRRGGWTKGRKRKRS) show a composition bias toward basic residues. Positions 101-169 (PKAPLTGYVR…RYTKELQQYQ (69 aa)) form a DNA-binding region, HMG box. Over residues 112 to 124 (MNERREQLRTERP) the composition is skewed to basic and acidic residues. The span at 167–180 (QYQNTDAYQTYSRK) shows a compositional bias: polar residues. Positions 227–290 (SKAREAELRQ…QHLQSVRQAL (64 aa)) form a coiled coil.

Its subcellular location is the nucleus. Plays a role in neuronal differentiation. The chain is High mobility group protein 20A (hmg20a) from Xenopus tropicalis (Western clawed frog).